The primary structure comprises 549 residues: Alanine aminotransferase 2-like (549 aa).

N6-(pyridoxal phosphate)lysine is present on lysine 367.

Belongs to the class-I pyridoxal-phosphate-dependent aminotransferase family. Alanine aminotransferase subfamily. Homodimer. Pyridoxal 5'-phosphate is required as a cofactor.

It catalyses the reaction L-alanine + 2-oxoglutarate = pyruvate + L-glutamate. It participates in amino-acid degradation; L-alanine degradation via transaminase pathway; pyruvate from L-alanine: step 1/1. Catalyzes the reversible transamination between alanine and 2-oxoglutarate to form pyruvate and glutamate. The chain is Alanine aminotransferase 2-like (gpt2l) from Danio rerio (Zebrafish).